Here is a 380-residue protein sequence, read N- to C-terminus: Putative 12-oxophytodienoate reductase 4 (380 aa).

FMN is bound by residues 36 to 38, A69, and Q111; that span reads PLT. Residue 183 to 186 participates in substrate binding; it reads HGAH. Catalysis depends on Y188, which acts as the Proton donor. FMN is bound at residue R235. Residue R276 coordinates substrate. Residues G306 and 327–328 each bind FMN; that span reads GR.

Belongs to the NADH:flavin oxidoreductase/NADH oxidase family. It depends on FMN as a cofactor.

Its function is as follows. Putative oxophytodienoate reductase that may be involved in the biosynthesis or metabolism of oxylipin signaling molecules. The protein is Putative 12-oxophytodienoate reductase 4 (OPR4) of Oryza sativa subsp. japonica (Rice).